A 472-amino-acid chain; its full sequence is Ras-GEF domain-containing family member 1B (472 aa).

Positions 34 to 164 (HDNNLLSGSL…MMQCLIRKLA (131 aa)) constitute an N-terminal Ras-GEF domain. The 249-residue stretch at 204–452 (DPYTLAQQLT…YLASYESEGP (249 aa)) folds into the Ras-GEF domain.

As to quaternary structure, interacts with CCDC124 during cytokinesis. Interacts with Ras family proteins.

It localises to the early endosome. The protein localises to the late endosome. It is found in the midbody. Guanine nucleotide exchange factor (GEF) with specificity for RAP2A, it doesn't seems to activate other Ras family proteins (in vitro). The sequence is that of Ras-GEF domain-containing family member 1B (RASGEF1B) from Pongo abelii (Sumatran orangutan).